We begin with the raw amino-acid sequence, 321 residues long: Ubiquinone biosynthesis protein COQ4, mitochondrial (321 aa).

His-205, Asp-206, His-209, and Glu-221 together coordinate Zn(2+).

It belongs to the COQ4 family. As to quaternary structure, component of a multi-subunit COQ enzyme complex, composed of at least COQ3, COQ4, COQ5, COQ6, COQ7 and COQ9. Zn(2+) is required as a cofactor.

It localises to the mitochondrion inner membrane. The enzyme catalyses a 4-hydroxy-3-methoxy-5-(all-trans-polyprenyl)benzoate + H(+) = a 2-methoxy-6-(all-trans-polyprenyl)phenol + CO2. Its pathway is cofactor biosynthesis; ubiquinone biosynthesis. Its function is as follows. Lyase that catalyzes the C1-decarboxylation of 4-hydroxy-3-methoxy-5-(all-trans-polyprenyl)benzoic acid into 2-methoxy-6-(all-trans-polyprenyl)phenol during ubiquinone biosynthesis. The chain is Ubiquinone biosynthesis protein COQ4, mitochondrial from Candida tropicalis (strain ATCC MYA-3404 / T1) (Yeast).